Reading from the N-terminus, the 293-residue chain is MPWIQLKIDTDNQHADALSDLLMEEGSLSITLEDGKDTPIYEPTLGETPLWNHTVLTALFEADRDLAIVVEQLKLQPYLGEDFSYKIEQVEDKDWEREWMDNFHPIKFGERLWICPSWREIPDPDAVNIILDPGLAFGTGTHPTTALCLEWLDSLDFADKEVIDFGCGSGILAVAALKLGATKVTGIDIDYQAIDASKANAERNGVEDQLALFLPEDQPKDLQADILVANILAGPLRELAPLIAEKVKTGGQLALSGLLKEQAEEVAEFYTQWFDMDEPAHKEDWSRLTGIRK.

S-adenosyl-L-methionine is bound by residues T145, G166, D188, and N230.

The protein belongs to the methyltransferase superfamily. PrmA family.

The protein resides in the cytoplasm. The catalysed reaction is L-lysyl-[protein] + 3 S-adenosyl-L-methionine = N(6),N(6),N(6)-trimethyl-L-lysyl-[protein] + 3 S-adenosyl-L-homocysteine + 3 H(+). Its function is as follows. Methylates ribosomal protein L11. The polypeptide is Ribosomal protein L11 methyltransferase (Shewanella sediminis (strain HAW-EB3)).